We begin with the raw amino-acid sequence, 55 residues long: Large ribosomal subunit protein bL33 (55 aa).

It belongs to the bacterial ribosomal protein bL33 family.

This Buchnera aphidicola subsp. Acyrthosiphon pisum (strain 5A) protein is Large ribosomal subunit protein bL33.